A 308-amino-acid polypeptide reads, in one-letter code: Zinc-binding protein TroA (308 aa).

An N-terminal signal peptide occupies residues M1–A22. Residues H68, H133, H199, and D279 each coordinate Zn(2+).

This sequence belongs to the bacterial solute-binding protein 9 family. As to quaternary structure, monomer.

The protein resides in the periplasm. Its function is as follows. Part of the ATP-binding cassette (ABC) transport system TroABC involved in zinc import. Binds zinc with high affinity and specificity and delivers it to the membrane permease for translocation into the cytoplasm. This is Zinc-binding protein TroA (troA) from Treponema pallidum (strain Nichols).